The primary structure comprises 373 residues: Glutamine synthetase (373 aa).

At Thr2 the chain carries N-acetylthreonine. A required for glutamine-induced ubiquitination by CRL4(CRBN) and proteasomal degradation region spans residues 2 to 25 (TTSASSHLNKGIKQVYMSLPQGEK). N6-acetyllysine; by EP300 occurs at positions 11 and 14. The GS beta-grasp domain occupies 24 to 106 (EKVQAMYIWI…VLCEVFKYNR (83 aa)). At Tyr104 the chain carries Phosphotyrosine. The GS catalytic domain occupies 113–373 (LRHTCKRIMD…TGDEPFQYKN (261 aa)). Residue Glu134 participates in ATP binding. Residues Glu134, Glu136, Glu196, and Glu203 each contribute to the Mn(2+) site. An ATP-binding site is contributed by 203 to 208 (EFQIGP). 246–247 (NW) is an L-glutamate binding site. His253 contributes to the Mn(2+) binding site. ATP-binding positions include 255 to 257 (NFS), Arg319, and Arg324. Arg319 provides a ligand contact to L-glutamate. Position 336 to 338 (336 to 338 (YFE)) interacts with ADP. Glu338 contributes to the Mn(2+) binding site. An L-glutamate-binding site is contributed by Arg340. Ser343 carries the phosphoserine modification.

It belongs to the glutamine synthetase family. Decamer; composed of two pentamers. Interacts with PALMD. Interacts with RHOJ. Interacts with BEST2; this interaction tethers a fraction of GLUL to the membrane, causing a decrease of cytosolic glutamine synthase (GS) activity and inhibits the chloride channel activity of BEST2 by affecting the gating at the aperture in the absence of intracellular glutamate. Requires Mg(2+) as cofactor. Mn(2+) serves as cofactor. Acetylated by EP300/p300; acetylation is stimulated by increased glutamine levels and promotes ubiquitin-mediated proteasomal degradation. In terms of processing, palmitoylated; undergoes autopalmitoylation. Post-translationally, ubiquitinated by ZNRF1. Ubiquitinated by the DCX (DDB1-CUL4-X-box) E3 ubiquitin-protein ligase complex called CRL4(CRBN), leading to proteasomal degradation. In terms of tissue distribution, expressed in endothelial cells.

It localises to the cytoplasm. Its subcellular location is the cytosol. The protein resides in the microsome. It is found in the mitochondrion. The protein localises to the cell membrane. The catalysed reaction is L-glutamate + NH4(+) + ATP = L-glutamine + ADP + phosphate + H(+). The enzyme catalyses L-cysteinyl-[protein] + hexadecanoyl-CoA = S-hexadecanoyl-L-cysteinyl-[protein] + CoA. Glutamine synthetase activity is inhibited by methionine sulfoximine (MSO). Glutamine synthetase that catalyzes the ATP-dependent conversion of glutamate and ammonia to glutamine. Its role depends on tissue localization: in the brain, it regulates the levels of toxic ammonia and converts neurotoxic glutamate to harmless glutamine, whereas in the liver, it is one of the enzymes responsible for the removal of ammonia. Plays a key role in ammonium detoxification during erythropoiesis: the glutamine synthetase activity is required to remove ammonium generated by porphobilinogen deaminase (HMBS) during heme biosynthesis to prevent ammonium accumulation and oxidative stress. Essential for proliferation of fetal skin fibroblasts. Independently of its glutamine synthetase activity, required for endothelial cell migration during vascular development: acts by regulating membrane localization and activation of the GTPase RHOJ, possibly by promoting RHOJ palmitoylation. May act as a palmitoyltransferase for RHOJ: able to autopalmitoylate and then transfer the palmitoyl group to RHOJ. Plays a role in ribosomal 40S subunit biogenesis. Through the interaction with BEST2, inhibits BEST2 channel activity by affecting the gating at the aperture in the absence of intracellular L-glutamate, but sensitizes BEST2 to intracellular L-glutamate, which promotes the opening of BEST2 and thus relieves its inhibitory effect on BEST2. The protein is Glutamine synthetase of Homo sapiens (Human).